Reading from the N-terminus, the 118-residue chain is Protein Rev (118 aa).

2 positions are modified to phosphoserine; by host CK2: S5 and S8. The tract at residues L18 to N26 is homomultimerization. The tract at residues Y23–R46 is disordered. The short motif at T34–R50 is the Nuclear localization signal and RNA-binding (RRE) element. Basic residues predominate over residues Q36 to R46. Positions L73–N84 match the Nuclear export signal and binding to XPO1 motif. The tract at residues E87–C118 is disordered. Residue S92 is modified to Phosphoserine; by host. Residues S103–S112 show a composition bias toward polar residues.

The protein belongs to the HIV-1 REV protein family. As to quaternary structure, homomultimer; when bound to the RRE. Multimeric assembly is essential for activity and may involve XPO1. Binds to human KPNB1, XPO1, TNPO1, RANBP5 and IPO7. Interacts with the viral Integrase. Interacts with human KHDRBS1. Interacts with human NAP1; this interaction decreases Rev multimerization and stimulates its activity. Interacts with human DEAD-box helicases DDX3 and DDX24; these interactions may serve for viral RNA export to the cytoplasm and packaging, respectively. Interacts with human PSIP1; this interaction may inhibit HIV-1 DNA integration by promoting dissociation of the Integrase-LEDGF/p75 complex. In terms of processing, asymmetrically arginine dimethylated at one site by host PRMT6. Methylation impairs the RNA-binding activity and export of viral RNA from the nucleus to the cytoplasm. Post-translationally, phosphorylated by protein kinase CK2. Presence of, and maybe binding to the N-terminus of the regulatory beta subunit of CK2 is necessary for CK2-mediated Rev's phosphorylation.

It localises to the host nucleus. The protein localises to the host nucleolus. It is found in the host cytoplasm. Functionally, escorts unspliced or incompletely spliced viral pre-mRNAs (late transcripts) out of the nucleus of infected cells. These pre-mRNAs carry a recognition sequence called Rev responsive element (RRE) located in the env gene, that is not present in fully spliced viral mRNAs (early transcripts). This function is essential since most viral proteins are translated from unspliced or partially spliced pre-mRNAs which cannot exit the nucleus by the pathway used by fully processed cellular mRNAs. Rev itself is translated from a fully spliced mRNA that readily exits the nucleus. Rev's nuclear localization signal (NLS) binds directly to KPNB1/Importin beta-1 without previous binding to KPNA1/Importin alpha-1. KPNB1 binds to the GDP bound form of RAN (Ran-GDP) and targets Rev to the nucleus. In the nucleus, the conversion from Ran-GDP to Ran-GTP dissociates Rev from KPNB1 and allows Rev's binding to the RRE in viral pre-mRNAs. Rev multimerization on the RRE via cooperative assembly exposes its nuclear export signal (NES) to the surface. Rev can then form a complex with XPO1/CRM1 and Ran-GTP, leading to nuclear export of the complex. Conversion from Ran-GTP to Ran-GDP mediates dissociation of the Rev/RRE/XPO1/RAN complex, so that Rev can return to the nucleus for a subsequent round of export. Beside KPNB1, also seems to interact with TNPO1/Transportin-1, RANBP5/IPO5 and IPO7/RANBP7 for nuclear import. The nucleoporin-like HRB/RIP is an essential cofactor that probably indirectly interacts with Rev to release HIV RNAs from the perinuclear region to the cytoplasm. The chain is Protein Rev from Human immunodeficiency virus type 1 group M subtype D (isolate ELI) (HIV-1).